The sequence spans 150 residues: Glycophorin-A (150 aa).

A signal peptide spans 1-19 (MYGKIIFVLLLSEIVSISA). Over 20 to 91 (LSTTEVAMHT…QLAHHFSEPE (72 aa)) the chain is Extracellular. The O-linked (GalNAc...) serine glycan is linked to Ser21. O-linked (GalNAc...) threonine glycosylation is found at Thr22, Thr23, and Thr29. Residue Ser30 is glycosylated (O-linked (GalNAc...) serine). Thr31 is a glycosylation site (O-linked (GalNAc...) threonine). An O-linked (GalNAc...) serine glycan is attached at Ser32. Thr36 carries O-linked (GalNAc...) threonine glycosylation. 2 O-linked (GalNAc...) serine glycosylation sites follow: Ser38 and Ser41. O-linked (GalNAc...) threonine glycosylation is present at Thr44. Asn45 carries an N-linked (GlcNAc...) asparagine glycan. 2 O-linked (GalNAc...) threonine glycosylation sites follow: Thr52 and Thr56. O-linked (GalNAc...) serine glycosylation is found at Ser63 and Ser66. Thr69 carries O-linked (GalNAc...) threonine glycosylation. The helical transmembrane segment at 92 to 114 (ITLIIFGVMAGVIGTILLISYGI) threads the bilayer. Over 115-150 (RRLIKKSPSDVKPLPSPDTDVPLSSVEIENPETSDQ) the chain is Cytoplasmic. Residues 121 to 150 (SPSDVKPLPSPDTDVPLSSVEIENPETSDQ) form a disordered region. Thr133 carries the phosphothreonine modification. Phosphoserine is present on residues Ser138 and Ser148.

It belongs to the glycophorin A family. As to quaternary structure, homodimer. Component of the ankyrin-1 complex in the erythrocyte, composed of ANK1, RHCE, RHAG, SLC4A1, EPB42, GYPA, GYPB and AQP1. Interacts with SLC4A1; a GYPA monomer is bound at each end of the SLC4A1 dimer forming a heterotetramer. (Microbial infection) Interacts with Streptococcus gordonii hsa protein. In terms of assembly, (Microbial infection) Interacts (in a sialic acid-independent manner) with P.falciparum MSP1 subunit p83. The major O-linked glycan are NeuAc-alpha-(2-3)-Gal-beta-(1-3)-[NeuAc-alpha-(2-6)]-GalNAcOH (about 78 %) and NeuAc-alpha-(2-3)-Gal-beta-(1-3)-GalNAcOH (17 %). Minor O-glycans (5 %) include NeuAc-alpha-(2-3)-Gal-beta-(1-3)-[NeuAc-alpha-(2-6)]-GalNAcOH NeuAc-alpha-(2-8)-NeuAc-alpha-(2-3)-Gal-beta-(1-3)-GalNAcOH. About 1% of all O-linked glycans carry blood group A, B and H determinants. They derive from a type-2 precursor core structure, Gal-beta-(1,3)-GlcNAc-beta-1-R, and the antigens are synthesized by addition of fucose (H antigen-specific) and then N-acetylgalactosamine (A antigen-specific) or galactose (B antigen-specific). Specifically O-linked-glycans are NeuAc-alpha-(2-3)-Gal-beta-(1-3)-GalNAcOH-(6-1)-GlcNAc-beta-(4-1)-[Fuc-alpha-(1-2)]-Gal-beta-(3-1)-GalNAc-alpha (about 1%, B antigen-specific) and NeuAc-alpha-(2-3)-Gal-beta-(1-3)-GalNAcOH-(6-1)-GlcNAc-beta-(4-1)-[Fuc-alpha-(1-2)]-Gal-beta (1 %, O antigen-, A antigen- and B antigen-specific).

It is found in the cell membrane. Functionally, component of the ankyrin-1 complex, a multiprotein complex involved in the stability and shape of the erythrocyte membrane. Glycophorin A is the major intrinsic membrane protein of the erythrocyte. The N-terminal glycosylated segment, which lies outside the erythrocyte membrane, has MN blood group receptors. Appears to be important for the function of SLC4A1 and is required for high activity of SLC4A1. May be involved in translocation of SLC4A1 to the plasma membrane. In terms of biological role, (Microbial infection) Appears to be a receptor for Hepatitis A virus (HAV). (Microbial infection) Receptor for P.falciparum erythrocyte-binding antigen 175 (EBA-175); binding of EBA-175 is dependent on sialic acid residues of the O-linked glycans. In Homo sapiens (Human), this protein is Glycophorin-A.